A 117-amino-acid chain; its full sequence is Large ribosomal subunit protein uL22 (117 aa).

This sequence belongs to the universal ribosomal protein uL22 family. As to quaternary structure, part of the 50S ribosomal subunit.

This protein binds specifically to 23S rRNA; its binding is stimulated by other ribosomal proteins, e.g. L4, L17, and L20. It is important during the early stages of 50S assembly. It makes multiple contacts with different domains of the 23S rRNA in the assembled 50S subunit and ribosome. Its function is as follows. The globular domain of the protein is located near the polypeptide exit tunnel on the outside of the subunit, while an extended beta-hairpin is found that lines the wall of the exit tunnel in the center of the 70S ribosome. The protein is Large ribosomal subunit protein uL22 of Lactobacillus helveticus (strain DPC 4571).